Here is a 503-residue protein sequence, read N- to C-terminus: ESX-5 secretion system protein EccD5 (503 aa).

A run of 11 helical transmembrane segments spans residues 137-157, 169-189, 200-220, 224-244, 250-270, 272-292, 359-379, 382-402, 413-433, 439-459, and 480-500; these read IVAVQVGASMVATGVVLATGV, LTTIYTAVIGVLVLAVAMLLL, VADIMLMSAIMPVTVAAAAAP, VGSPQAVLGFGVLTVAAALAL, RLGIYTTIVIIGALTMLAALA, MVAATSAVTLLSSLLLICVVA, FLSGLLTGLGVMVVVCMTSLC, HTGQRWLPLILAGFTSGFLLL, SITLAGTAVIIAAAVCVRYAL, LAVSIVAAILVLLPAAGMAAA, and YLCLMPIFPLALWLMNVYAAI.

It belongs to the EccD/Snm4 family. Part of the ESX-5 / type VII secretion system (T7SS), which is composed of cytosolic and membrane components. The ESX-5 membrane complex is composed of EccB5, EccC5, EccD5 and EccE5.

The protein resides in the cell inner membrane. Part of the ESX-5 specialized secretion system, which is responsible for the secretion of EsxN and a number of PE_PGRS and PPE proteins, including PPE41. The chain is ESX-5 secretion system protein EccD5 from Mycobacterium tuberculosis (strain CDC 1551 / Oshkosh).